The primary structure comprises 450 residues: Probable ECA polymerase (450 aa).

11 helical membrane-spanning segments follow: residues 6–26 (FSGL…LTWF), 37–57 (VFFS…TSVL), 63–83 (VGVA…CFYA), 118–138 (VILM…NGFL), 155–175 (GVAL…VYFL), 181–201 (AWLF…MIVG), 207–227 (IIIA…ISLW), 228–248 (MLAA…LKRY), 341–361 (LVVM…GLII), 378–398 (YKAA…IVLA), and 410–430 (VFFI…YWLF).

It belongs to the WzyE family. As to quaternary structure, probably part of a complex composed of WzxE, WzyE and WzzE.

It is found in the cell inner membrane. It functions in the pathway bacterial outer membrane biogenesis; enterobacterial common antigen biosynthesis. Functionally, probably involved in the polymerization of enterobacterial common antigen (ECA) trisaccharide repeat units. This is Probable ECA polymerase from Escherichia fergusonii (strain ATCC 35469 / DSM 13698 / CCUG 18766 / IAM 14443 / JCM 21226 / LMG 7866 / NBRC 102419 / NCTC 12128 / CDC 0568-73).